The following is a 278-amino-acid chain: Large ribosomal subunit protein uL2 (278 aa).

Residues 218–278 (RPHNRGVVMN…IMRSRHQRKK (61 aa)) are disordered.

This sequence belongs to the universal ribosomal protein uL2 family. As to quaternary structure, part of the 50S ribosomal subunit. Forms a bridge to the 30S subunit in the 70S ribosome.

Functionally, one of the primary rRNA binding proteins. Required for association of the 30S and 50S subunits to form the 70S ribosome, for tRNA binding and peptide bond formation. It has been suggested to have peptidyltransferase activity; this is somewhat controversial. Makes several contacts with the 16S rRNA in the 70S ribosome. The sequence is that of Large ribosomal subunit protein uL2 from Rhizobium etli (strain CIAT 652).